Reading from the N-terminus, the 573-residue chain is 2-succinyl-5-enolpyruvyl-6-hydroxy-3-cyclohexene-1-carboxylate synthase (573 aa).

This sequence belongs to the TPP enzyme family. MenD subfamily. In terms of assembly, homodimer. Mg(2+) serves as cofactor. The cofactor is Mn(2+). It depends on thiamine diphosphate as a cofactor.

It carries out the reaction isochorismate + 2-oxoglutarate + H(+) = 5-enolpyruvoyl-6-hydroxy-2-succinyl-cyclohex-3-ene-1-carboxylate + CO2. It functions in the pathway quinol/quinone metabolism; 1,4-dihydroxy-2-naphthoate biosynthesis; 1,4-dihydroxy-2-naphthoate from chorismate: step 2/7. The protein operates within quinol/quinone metabolism; menaquinone biosynthesis. Catalyzes the thiamine diphosphate-dependent decarboxylation of 2-oxoglutarate and the subsequent addition of the resulting succinic semialdehyde-thiamine pyrophosphate anion to isochorismate to yield 2-succinyl-5-enolpyruvyl-6-hydroxy-3-cyclohexene-1-carboxylate (SEPHCHC). This chain is 2-succinyl-5-enolpyruvyl-6-hydroxy-3-cyclohexene-1-carboxylate synthase, found in Shewanella oneidensis (strain ATCC 700550 / JCM 31522 / CIP 106686 / LMG 19005 / NCIMB 14063 / MR-1).